We begin with the raw amino-acid sequence, 247 residues long: Chymase (247 aa).

Positions 1–19 are cleaved as a signal peptide; that stretch reads MHLLTLHLLLLLLGSSTKA. Positions 20-21 are cleaved as a propeptide — activation peptide; the sequence is GE. One can recognise a Peptidase S1 domain in the interval 22 to 245; it reads IIGGTECIPH…YRPWINKILR (224 aa). C51 and C67 are joined by a disulfide. The active-site Charge relay system is H66. An N-linked (GlcNAc...) asparagine glycan is attached at N80. D110 (charge relay system) is an active-site residue. Intrachain disulfides connect C144-C209 and C175-C188. S203 serves as the catalytic Charge relay system.

This sequence belongs to the peptidase S1 family. Granzyme subfamily. In terms of tissue distribution, mast cells.

It localises to the secreted. The protein localises to the cytoplasmic granule. The catalysed reaction is Preferential cleavage: Phe-|-Xaa &gt; Tyr-|-Xaa &gt; Trp-|-Xaa &gt; Leu-|-Xaa.. Its function is as follows. Major secreted protease of mast cells with suspected roles in vasoactive peptide generation, extracellular matrix degradation, and regulation of gland secretion. The polypeptide is Chymase (Cma1) (Mus musculus (Mouse)).